A 121-amino-acid polypeptide reads, in one-letter code: Large ribosomal subunit protein bL20 (121 aa).

It belongs to the bacterial ribosomal protein bL20 family.

Functionally, binds directly to 23S ribosomal RNA and is necessary for the in vitro assembly process of the 50S ribosomal subunit. It is not involved in the protein synthesizing functions of that subunit. This Chlamydia pneumoniae (Chlamydophila pneumoniae) protein is Large ribosomal subunit protein bL20 (rplT).